The sequence spans 291 residues: Pituitary-specific positive transcription factor 1 (291 aa).

Positions 5–13 (SFTSADTFI) match the 9aaTAD motif. The region spanning 124–198 (MDSPEIRELE…ILSKWLEEAE (75 aa)) is the POU-specific domain. Positions 214–273 (KRKRRTTISVAAKDALERHFGEHSKPSSQEIMRMAEELNLEKEVVRVWFCNRRQREKRVK) form a DNA-binding region, homeobox.

Belongs to the POU transcription factor family. Class-1 subfamily. Interacts with PITX1. Interacts with LHX3. Interacts with ELK1.

It localises to the nucleus. In terms of biological role, transcription factor involved in the specification of the lactotrope, somatotrope, and thyrotrope phenotypes in the developing anterior pituitary. Activates growth hormone and prolactin genes. Specifically binds to the consensus sequence 5'-TAAAT-3'. The chain is Pituitary-specific positive transcription factor 1 (Pou1f1) from Mus musculus (Mouse).